The following is a 248-amino-acid chain: UDP-N-acetyl-D-mannosaminuronic acid transferase (248 aa).

The protein belongs to the glycosyltransferase 26 family.

It carries out the reaction UDP-N-acetyl-alpha-D-mannosaminouronate + N-acetyl-alpha-D-glucosaminyl-di-trans,octa-cis-undecaprenyl diphosphate = beta-D-ManNAcA-(1-&gt;4)-alpha-D-GlcNAc-di-trans,octa-cis-undecaprenyl diphosphate + UDP + H(+). Its pathway is bacterial outer membrane biogenesis; enterobacterial common antigen biosynthesis. Functionally, catalyzes the synthesis of Und-PP-GlcNAc-ManNAcA (Lipid II), the second lipid-linked intermediate involved in enterobacterial common antigen (ECA) synthesis. This is UDP-N-acetyl-D-mannosaminuronic acid transferase from Klebsiella pneumoniae subsp. pneumoniae (strain ATCC 700721 / MGH 78578).